A 143-amino-acid polypeptide reads, in one-letter code: Ribonuclease H (143 aa).

In terms of domain architecture, RNase H type-1 spans 1–136 (MQEIEIFCDG…CDSLAKLEAQ (136 aa)). Mg(2+) contacts are provided by Asp-9, Glu-47, Asp-69, and Asp-128.

Belongs to the RNase H family. In terms of assembly, monomer. Requires Mg(2+) as cofactor.

It is found in the cytoplasm. The catalysed reaction is Endonucleolytic cleavage to 5'-phosphomonoester.. In terms of biological role, endonuclease that specifically degrades the RNA of RNA-DNA hybrids. The sequence is that of Ribonuclease H from Helicobacter acinonychis (strain Sheeba).